The chain runs to 122 residues: Large ribosomal subunit protein uL14 (122 aa).

Belongs to the universal ribosomal protein uL14 family. As to quaternary structure, part of the 50S ribosomal subunit. Forms a cluster with proteins L3 and L19. In the 70S ribosome, L14 and L19 interact and together make contacts with the 16S rRNA in bridges B5 and B8.

Its function is as follows. Binds to 23S rRNA. Forms part of two intersubunit bridges in the 70S ribosome. The sequence is that of Large ribosomal subunit protein uL14 from Bacillus licheniformis (strain ATCC 14580 / DSM 13 / JCM 2505 / CCUG 7422 / NBRC 12200 / NCIMB 9375 / NCTC 10341 / NRRL NRS-1264 / Gibson 46).